Here is a 370-residue protein sequence, read N- to C-terminus: Apolipoprotein A-V (370 aa).

An N-terminal signal peptide occupies residues 1 to 21 (MASMIALLTWALALLPALASA). Ser-59 is subject to Phosphoserine.

Belongs to the apolipoprotein A1/A4/E family. Interacts with GPIHBP1. Interacts with SORL1; this interaction leads to APOA5 internalization and sorting either to lysosomes and degradation, or to the trans-Golgi network.

The protein localises to the secreted. It localises to the early endosome. Its subcellular location is the late endosome. It is found in the golgi apparatus. The protein resides in the trans-Golgi network. Functionally, minor apolipoprotein mainly associated with HDL and to a lesser extent with VLDL. May also be associated with chylomicrons. Important determinant of plasma triglyceride (TG) levels by both being a potent stimulator of apo-CII lipoprotein lipase (LPL) TG hydrolysis and an inhibitor of the hepatic VLDL-TG production rate (without affecting the VLDL-apoB production rate). Activates poorly lecithin:cholesterol acyltransferase (LCAT) and does not enhance efflux of cholesterol from macrophages. Binds heparin. This is Apolipoprotein A-V (APOA5) from Acinonyx jubatus (Cheetah).